The following is a 288-amino-acid chain: 4-diphosphocytidyl-2-C-methyl-D-erythritol kinase (288 aa).

Lys8 is a catalytic residue. Residue 90 to 100 participates in ATP binding; that stretch reads PVGAGLAGGSS. The active site involves Asp132.

This sequence belongs to the GHMP kinase family. IspE subfamily.

It carries out the reaction 4-CDP-2-C-methyl-D-erythritol + ATP = 4-CDP-2-C-methyl-D-erythritol 2-phosphate + ADP + H(+). The protein operates within isoprenoid biosynthesis; isopentenyl diphosphate biosynthesis via DXP pathway; isopentenyl diphosphate from 1-deoxy-D-xylulose 5-phosphate: step 3/6. In terms of biological role, catalyzes the phosphorylation of the position 2 hydroxy group of 4-diphosphocytidyl-2C-methyl-D-erythritol. The sequence is that of 4-diphosphocytidyl-2-C-methyl-D-erythritol kinase from Chlamydia trachomatis serovar D (strain ATCC VR-885 / DSM 19411 / UW-3/Cx).